A 151-amino-acid polypeptide reads, in one-letter code: Potassium/proton antiporter CemA (151 aa).

Helical transmembrane passes span L7–F27 and I107–G127.

It belongs to the CemA family.

It is found in the plastid. The protein localises to the chloroplast inner membrane. It carries out the reaction K(+)(in) + H(+)(out) = K(+)(out) + H(+)(in). Contributes to K(+)/H(+) antiport activity by supporting proton efflux to control proton extrusion and homeostasis in chloroplasts in a light-dependent manner to modulate photosynthesis. Prevents excessive induction of non-photochemical quenching (NPQ) under continuous-light conditions. Indirectly promotes efficient inorganic carbon uptake into chloroplasts. The chain is Potassium/proton antiporter CemA from Aegilops crassa (Persian goatgrass).